Consider the following 290-residue polypeptide: Ribosomal RNA small subunit methyltransferase H (290 aa).

S-adenosyl-L-methionine is bound by residues 35-37, Asp54, Phe81, Asp97, and Gln104; that span reads GGH.

The protein belongs to the methyltransferase superfamily. RsmH family.

The protein resides in the cytoplasm. It catalyses the reaction cytidine(1402) in 16S rRNA + S-adenosyl-L-methionine = N(4)-methylcytidine(1402) in 16S rRNA + S-adenosyl-L-homocysteine + H(+). In terms of biological role, specifically methylates the N4 position of cytidine in position 1402 (C1402) of 16S rRNA. In Picosynechococcus sp. (strain ATCC 27264 / PCC 7002 / PR-6) (Agmenellum quadruplicatum), this protein is Ribosomal RNA small subunit methyltransferase H.